The sequence spans 3093 residues: Intermembrane lipid transfer protein VPS13A (3093 aa).

Positions 3-116 (FESVVVDVLN…LMEAKQQELK (114 aa)) constitute a Chorein N-terminal domain. The stretch at 373 to 406 (LTSKKPPGELLVSLEELEKTLDVLNITIARQQAE) is one TPR 1 repeat. Serine 839 carries the post-translational modification Phosphoserine. The short motif at 842-848 (EFFDAPC) is the FFAT element. Serine 1416 carries the post-translational modification Phosphoserine. The SHR-BD domain maps to 2209 to 2454 (VAFHSPYWMV…VFYTWADPVG (246 aa)). The stretch at 2860 to 2898 (ILGLDVLGNPFGLIREFSEGVEAFFYEPYQGAIQGPEEF) is one TPR 2 repeat. Residues 2953-3027 (PAGFREGITR…SSTFQGIKRA (75 aa)) are required for lipid droplet localization.

The protein belongs to the VPS13 family. In terms of assembly, interacts (via FFAT motif) with VAPA and VAPB. Interacts with RAB7A. Interacts with XK.

Its subcellular location is the mitochondrion outer membrane. It localises to the endoplasmic reticulum membrane. The protein localises to the endosome membrane. It is found in the lysosome membrane. The protein resides in the lipid droplet. Its subcellular location is the golgi apparatus. It localises to the cytoplasmic vesicle. The protein localises to the secretory vesicle. It is found in the neuronal dense core vesicle. Functionally, mediates the transfer of lipids between membranes at organelle contact sites. Required for the formation or stabilization of ER-mitochondria contact sites which enable transfer of lipids between the ER and mitochondria. Negatively regulates lipid droplet size and motility. Required for efficient lysosomal protein degradation. The chain is Intermembrane lipid transfer protein VPS13A (VPS13A) from Macaca fascicularis (Crab-eating macaque).